We begin with the raw amino-acid sequence, 646 residues long: Macrolide export ATP-binding/permease protein MacB (646 aa).

The region spanning 5–243 (IELKGVSRTY…TLPKTNRIRQ (239 aa)) is the ABC transporter domain. Position 41-48 (41-48 (GASGSGKS)) interacts with ATP. Transmembrane regions (helical) follow at residues 272–292 (TLTM…VALG), 518–538 (FSIL…IGVM), 570–590 (IIEA…LSYI), and 611–631 (AAVA…YLPA).

This sequence belongs to the ABC transporter superfamily. Macrolide exporter (TC 3.A.1.122) family. In terms of assembly, homodimer. Part of the tripartite efflux system MacAB-TolC, which is composed of an inner membrane transporter, MacB, a periplasmic membrane fusion protein, MacA, and an outer membrane component, TolC. The complex forms a large protein conduit and can translocate molecules across both the inner and outer membranes. Interacts with MacA.

It localises to the cell inner membrane. Part of the tripartite efflux system MacAB-TolC. MacB is a non-canonical ABC transporter that contains transmembrane domains (TMD), which form a pore in the inner membrane, and an ATP-binding domain (NBD), which is responsible for energy generation. Confers resistance against macrolides. This is Macrolide export ATP-binding/permease protein MacB from Escherichia coli.